Reading from the N-terminus, the 221-residue chain is Josephin-like protein (221 aa).

A disordered region spans residues 1 to 37; that stretch reads MESPSARTLGNSLGDDSGNGNENGNGSGNGNTTMMPH. Over residues 9-20 the composition is skewed to low complexity; it reads LGNSLGDDSGNG. Positions 36 to 214 constitute a Josephin domain; it reads PHGIYHERQT…DCKDKSQQRW (179 aa). The active-site Nucleophile is the cysteine 49. The active-site Proton acceptor is histidine 152.

It carries out the reaction Thiol-dependent hydrolysis of ester, thioester, amide, peptide and isopeptide bonds formed by the C-terminal Gly of ubiquitin (a 76-residue protein attached to proteins as an intracellular targeting signal).. Functionally, may act as a deubiquitinating enzyme. In Drosophila melanogaster (Fruit fly), this protein is Josephin-like protein.